The sequence spans 238 residues: Sugar fermentation stimulation protein homolog (238 aa).

This sequence belongs to the SfsA family.

In Brucella melitensis biotype 1 (strain ATCC 23456 / CCUG 17765 / NCTC 10094 / 16M), this protein is Sugar fermentation stimulation protein homolog.